A 246-amino-acid chain; its full sequence is 4-hydroxy-tetrahydrodipicolinate reductase (246 aa).

9 to 14 serves as a coordination point for NAD(+); the sequence is GNTGRM. Residue arginine 36 coordinates NADP(+). Residues 78-80 and 104-107 contribute to the NAD(+) site; these read GTT and SPNM. Histidine 137 (proton donor/acceptor) is an active-site residue. Histidine 138 contacts (S)-2,3,4,5-tetrahydrodipicolinate. Lysine 141 (proton donor) is an active-site residue. 147–148 is a binding site for (S)-2,3,4,5-tetrahydrodipicolinate; sequence GT.

This sequence belongs to the DapB family.

The protein localises to the cytoplasm. It carries out the reaction (S)-2,3,4,5-tetrahydrodipicolinate + NAD(+) + H2O = (2S,4S)-4-hydroxy-2,3,4,5-tetrahydrodipicolinate + NADH + H(+). The catalysed reaction is (S)-2,3,4,5-tetrahydrodipicolinate + NADP(+) + H2O = (2S,4S)-4-hydroxy-2,3,4,5-tetrahydrodipicolinate + NADPH + H(+). The protein operates within amino-acid biosynthesis; L-lysine biosynthesis via DAP pathway; (S)-tetrahydrodipicolinate from L-aspartate: step 4/4. Catalyzes the conversion of 4-hydroxy-tetrahydrodipicolinate (HTPA) to tetrahydrodipicolinate. In Chlamydia muridarum (strain MoPn / Nigg), this protein is 4-hydroxy-tetrahydrodipicolinate reductase.